We begin with the raw amino-acid sequence, 309 residues long: tRNA uridine(34) hydroxylase (309 aa).

The region spanning 130 to 225 is the Rhodanese domain; it reads RGEEVVFFDG…YGEKYGNDGL (96 aa). Cys-185 (cysteine persulfide intermediate) is an active-site residue.

It belongs to the TrhO family.

It catalyses the reaction uridine(34) in tRNA + AH2 + O2 = 5-hydroxyuridine(34) in tRNA + A + H2O. Its function is as follows. Catalyzes oxygen-dependent 5-hydroxyuridine (ho5U) modification at position 34 in tRNAs. The polypeptide is tRNA uridine(34) hydroxylase (Corynebacterium aurimucosum (strain ATCC 700975 / DSM 44827 / CIP 107346 / CN-1) (Corynebacterium nigricans)).